Consider the following 305-residue polypeptide: Acetyl-coenzyme A carboxylase carboxyl transferase subunit beta (305 aa).

Residues 27–296 enclose the CoA carboxyltransferase N-terminal domain; that stretch reads LWVKCSSCRE…SPAKAELAGR (270 aa). Positions 31, 34, 50, and 53 each coordinate Zn(2+). The C4-type zinc-finger motif lies at 31-53; that stretch reads CSSCRELIYKKQLNDNLKVCPKC.

Belongs to the AccD/PCCB family. As to quaternary structure, acetyl-CoA carboxylase is a heterohexamer composed of biotin carboxyl carrier protein (AccB), biotin carboxylase (AccC) and two subunits each of ACCase subunit alpha (AccA) and ACCase subunit beta (AccD). Zn(2+) is required as a cofactor.

It localises to the cytoplasm. The catalysed reaction is N(6)-carboxybiotinyl-L-lysyl-[protein] + acetyl-CoA = N(6)-biotinyl-L-lysyl-[protein] + malonyl-CoA. It participates in lipid metabolism; malonyl-CoA biosynthesis; malonyl-CoA from acetyl-CoA: step 1/1. Functionally, component of the acetyl coenzyme A carboxylase (ACC) complex. Biotin carboxylase (BC) catalyzes the carboxylation of biotin on its carrier protein (BCCP) and then the CO(2) group is transferred by the transcarboxylase to acetyl-CoA to form malonyl-CoA. This chain is Acetyl-coenzyme A carboxylase carboxyl transferase subunit beta, found in Chloroflexus aurantiacus (strain ATCC 29366 / DSM 635 / J-10-fl).